The sequence spans 227 residues: Cytidylate kinase (227 aa).

An ATP-binding site is contributed by 12–20 (GPGGAGKGT).

Belongs to the cytidylate kinase family. Type 1 subfamily.

It is found in the cytoplasm. The enzyme catalyses CMP + ATP = CDP + ADP. It catalyses the reaction dCMP + ATP = dCDP + ADP. The chain is Cytidylate kinase from Klebsiella pneumoniae (strain 342).